The primary structure comprises 235 residues: Cobalt transport protein CbiM (235 aa).

The next 6 membrane-spanning stretches (helical) occupy residues 6 to 26, 43 to 63, 85 to 105, 108 to 128, 133 to 153, and 181 to 201; these read GVLP…FVVH, LLLA…LPSV, MAFM…HGGI, LGAN…GAYV, LGGP…LSTY, and IFAI…ILLF.

The protein belongs to the CbiM family. Forms an energy-coupling factor (ECF) transporter complex composed of an ATP-binding protein (A component, CbiO), a transmembrane protein (T component, CbiQ) and 2 possible substrate-capture proteins (S components, CbiM and CbiN) of unknown stoichimetry.

It localises to the cell membrane. The protein operates within cofactor biosynthesis; adenosylcobalamin biosynthesis. Its function is as follows. Part of the energy-coupling factor (ECF) transporter complex CbiMNOQ involved in cobalt import. The polypeptide is Cobalt transport protein CbiM (Propionibacterium freudenreichii subsp. shermanii (strain ATCC 9614 / DSM 4902 / CIP 103027 / NCIMB 8099 / CIRM-BIA1)).